The chain runs to 768 residues: Phosphoribosylformylglycinamidine synthase subunit PurL (768 aa).

H48 is a catalytic residue. 2 residues coordinate ATP: Y51 and K90. E92 is a Mg(2+) binding site. Residues 93–96 and R115 contribute to the substrate site; that span reads SHNH. The active-site Proton acceptor is H94. D116 serves as a coordination point for Mg(2+). Residue Q239 coordinates substrate. D267 provides a ligand contact to Mg(2+). 311 to 313 lines the substrate pocket; that stretch reads ESQ. ATP contacts are provided by D507 and G544. N545 contacts Mg(2+). S547 contacts substrate.

The protein belongs to the FGAMS family. In terms of assembly, monomer. Part of the FGAM synthase complex composed of 1 PurL, 1 PurQ and 2 PurS subunits.

It localises to the cytoplasm. It catalyses the reaction N(2)-formyl-N(1)-(5-phospho-beta-D-ribosyl)glycinamide + L-glutamine + ATP + H2O = 2-formamido-N(1)-(5-O-phospho-beta-D-ribosyl)acetamidine + L-glutamate + ADP + phosphate + H(+). The protein operates within purine metabolism; IMP biosynthesis via de novo pathway; 5-amino-1-(5-phospho-D-ribosyl)imidazole from N(2)-formyl-N(1)-(5-phospho-D-ribosyl)glycinamide: step 1/2. In terms of biological role, part of the phosphoribosylformylglycinamidine synthase complex involved in the purines biosynthetic pathway. Catalyzes the ATP-dependent conversion of formylglycinamide ribonucleotide (FGAR) and glutamine to yield formylglycinamidine ribonucleotide (FGAM) and glutamate. The FGAM synthase complex is composed of three subunits. PurQ produces an ammonia molecule by converting glutamine to glutamate. PurL transfers the ammonia molecule to FGAR to form FGAM in an ATP-dependent manner. PurS interacts with PurQ and PurL and is thought to assist in the transfer of the ammonia molecule from PurQ to PurL. This is Phosphoribosylformylglycinamidine synthase subunit PurL from Parasynechococcus marenigrum (strain WH8102).